Reading from the N-terminus, the 120-residue chain is NAD(P)H-quinone oxidoreductase subunit 3, chloroplastic (120 aa).

3 helical membrane passes run 9-29 (IFWA…IISG), 64-84 (MFAL…PWAV), and 88-108 (VLGV…VVGS).

This sequence belongs to the complex I subunit 3 family. NDH is composed of at least 16 different subunits, 5 of which are encoded in the nucleus.

The protein localises to the plastid. Its subcellular location is the chloroplast thylakoid membrane. It catalyses the reaction a plastoquinone + NADH + (n+1) H(+)(in) = a plastoquinol + NAD(+) + n H(+)(out). The enzyme catalyses a plastoquinone + NADPH + (n+1) H(+)(in) = a plastoquinol + NADP(+) + n H(+)(out). Functionally, NDH shuttles electrons from NAD(P)H:plastoquinone, via FMN and iron-sulfur (Fe-S) centers, to quinones in the photosynthetic chain and possibly in a chloroplast respiratory chain. The immediate electron acceptor for the enzyme in this species is believed to be plastoquinone. Couples the redox reaction to proton translocation, and thus conserves the redox energy in a proton gradient. The protein is NAD(P)H-quinone oxidoreductase subunit 3, chloroplastic of Nuphar advena (Common spatterdock).